We begin with the raw amino-acid sequence, 98 residues long: Small ribosomal subunit protein bS20 (98 aa).

The protein belongs to the bacterial ribosomal protein bS20 family.

Binds directly to 16S ribosomal RNA. This is Small ribosomal subunit protein bS20 from Kosmotoga olearia (strain ATCC BAA-1733 / DSM 21960 / TBF 19.5.1).